Consider the following 164-residue polypeptide: Large ribosomal subunit protein uL10 (164 aa).

This sequence belongs to the universal ribosomal protein uL10 family. As to quaternary structure, part of the ribosomal stalk of the 50S ribosomal subunit. The N-terminus interacts with L11 and the large rRNA to form the base of the stalk. The C-terminus forms an elongated spine to which L12 dimers bind in a sequential fashion forming a multimeric L10(L12)X complex.

Its function is as follows. Forms part of the ribosomal stalk, playing a central role in the interaction of the ribosome with GTP-bound translation factors. In Aliivibrio fischeri (strain MJ11) (Vibrio fischeri), this protein is Large ribosomal subunit protein uL10.